We begin with the raw amino-acid sequence, 336 residues long: Glucokinase (336 aa).

12 to 17 contributes to the ATP binding site; sequence ADIGGT.

The protein belongs to the bacterial glucokinase family.

It is found in the cytoplasm. It catalyses the reaction D-glucose + ATP = D-glucose 6-phosphate + ADP + H(+). The chain is Glucokinase from Helicobacter pylori (strain J99 / ATCC 700824) (Campylobacter pylori J99).